Reading from the N-terminus, the 231-residue chain is LexA repressor (231 aa).

The disordered stretch occupies residues 1–24 (MTDRKEHKMKPGRRPTEGMTPSQE). The segment at residues 43–62 (VKEIAEALGMKTPSAHEQVQ) is a DNA-binding region (H-T-H motif). Catalysis depends on for autocatalytic cleavage activity residues S146 and K183.

This sequence belongs to the peptidase S24 family. In terms of assembly, homodimer.

It carries out the reaction Hydrolysis of Ala-|-Gly bond in repressor LexA.. Functionally, represses a number of genes involved in the response to DNA damage (SOS response), including recA and lexA. In the presence of single-stranded DNA, RecA interacts with LexA causing an autocatalytic cleavage which disrupts the DNA-binding part of LexA, leading to derepression of the SOS regulon and eventually DNA repair. The protein is LexA repressor of Magnetococcus marinus (strain ATCC BAA-1437 / JCM 17883 / MC-1).